Consider the following 32-residue polypeptide: Photosystem II reaction center protein T (32 aa).

Residues 3–23 traverse the membrane as a helical segment; it reads AITYTFILFLTLGLLFFAVAF.

Belongs to the PsbT family. In terms of assembly, PSII is composed of 1 copy each of membrane proteins PsbA, PsbB, PsbC, PsbD, PsbE, PsbF, PsbH, PsbI, PsbJ, PsbK, PsbL, PsbM, PsbT, PsbX, PsbY, PsbZ, Psb30/Ycf12, peripheral proteins PsbO, CyanoQ (PsbQ), PsbU, PsbV and a large number of cofactors. It forms dimeric complexes.

The protein resides in the cellular thylakoid membrane. Functionally, found at the monomer-monomer interface of the photosystem II (PS II) dimer, plays a role in assembly and dimerization of PSII. PSII is a light-driven water plastoquinone oxidoreductase, using light energy to abstract electrons from H(2)O, generating a proton gradient subsequently used for ATP formation. The protein is Photosystem II reaction center protein T of Synechococcus sp. (strain JA-2-3B'a(2-13)) (Cyanobacteria bacterium Yellowstone B-Prime).